Here is a 634-residue protein sequence, read N- to C-terminus: Extracellular metalloproteinase MEP (634 aa).

The signal sequence occupies residues 1 to 18; it reads MRGLLLAGALALPASVFA. A propeptide spanning residues 19–245 is cleaved from the precursor; the sequence is HPAHQSYGLN…IHGVVDYVAE (227 aa). A Zn(2+)-binding site is contributed by His429. Glu430 is a catalytic residue. Residue His433 coordinates Zn(2+).

It belongs to the peptidase M36 family. The cofactor is Zn(2+).

It localises to the secreted. Secreted metalloproteinase that allows assimilation of proteinaceous substrates and probably acts as a virulence factor. The protein is Extracellular metalloproteinase MEP (MEP) of Neosartorya fischeri (strain ATCC 1020 / DSM 3700 / CBS 544.65 / FGSC A1164 / JCM 1740 / NRRL 181 / WB 181) (Aspergillus fischerianus).